The chain runs to 276 residues: Urease accessory protein UreD (276 aa).

It belongs to the UreD family. In terms of assembly, ureD, UreF and UreG form a complex that acts as a GTP-hydrolysis-dependent molecular chaperone, activating the urease apoprotein by helping to assemble the nickel containing metallocenter of UreC. The UreE protein probably delivers the nickel.

It is found in the cytoplasm. In terms of biological role, required for maturation of urease via the functional incorporation of the urease nickel metallocenter. The chain is Urease accessory protein UreD from Verminephrobacter eiseniae (strain EF01-2).